Here is a 1086-residue protein sequence, read N- to C-terminus: 1,2-beta-oligoglucan phosphorylase (1086 aa).

Residue Asp-741 is the Proton donor of the active site.

This sequence belongs to the glycosyl hydrolase 94 family. In terms of assembly, monomer.

The enzyme catalyses [(1-&gt;2)-beta-D-glucosyl](n) + phosphate = [(1-&gt;2)-beta-D-glucosyl](n-1) + alpha-D-glucose 1-phosphate. Functionally, catalyzes the reversible phosphorolysis of beta-(1-&gt;2)-D-glucans. The minimum length of the substrate for the phosphorolytic reaction is 3 D-glucose units. The protein is 1,2-beta-oligoglucan phosphorylase of Listeria innocua serovar 6a (strain ATCC BAA-680 / CLIP 11262).